Consider the following 35-residue polypeptide: Peptide Hact-3 (35 aa).

In terms of tissue distribution, expressed in tentacles.

The protein localises to the nematocyst. It localises to the secreted. In terms of biological role, peptide with unknown function. Does not exhibit antimicrobial activity against Escherichia coli and Staphylococcus aureus. This Heliofungia actiniformis (Mushroom coral) protein is Peptide Hact-3.